A 103-amino-acid chain; its full sequence is Large ribosomal subunit protein uL23 (103 aa).

Belongs to the universal ribosomal protein uL23 family. As to quaternary structure, part of the 50S ribosomal subunit. Contacts protein L29, and trigger factor when it is bound to the ribosome.

In terms of biological role, one of the early assembly proteins it binds 23S rRNA. One of the proteins that surrounds the polypeptide exit tunnel on the outside of the ribosome. Forms the main docking site for trigger factor binding to the ribosome. In Chlorobaculum tepidum (strain ATCC 49652 / DSM 12025 / NBRC 103806 / TLS) (Chlorobium tepidum), this protein is Large ribosomal subunit protein uL23.